The chain runs to 2265 residues: Collagen alpha-6(VI) chain (2265 aa).

A signal peptide spans 1 to 18 (MLLVLCLTMICFHVCVNQ). The segment at 19-1390 (DSGPEYADVV…TCCCLLCKCT (1372 aa)) is nonhelical region. VWFA domains lie at 26–205 (DVVF…IKDV), 228–406 (DVVF…LKKL), 435–605 (DIYL…RNQV), 621–790 (DIMF…EDDL), 808–981 (DVVF…FSDV), 999–1170 (DLVF…KKRI), and 1186–1378 (DVVV…INVA). N-linked (GlcNAc...) asparagine glycans are attached at residues Asn197, Asn238, and Asn346. Residue Asn760 is glycosylated (N-linked (GlcNAc...) asparagine). A triple-helical region region spans residues 1391-1724 (GGDGAMGDPG…GRKGVKGARG (334 aa)). The interval 1398–1722 (DPGSAGKKGP…PPGRKGVKGA (325 aa)) is disordered. The segment covering 1455–1470 (EEGEVGEDGLDGLDGE) has biased composition (acidic residues). Over residues 1497–1507 (AAGDRGAKGLR) the composition is skewed to basic and acidic residues. Positions 1507–1509 (RGD) match the Cell attachment site motif. Positions 1546-1558 (SRRKMVVHGRRGH) are enriched in basic residues. Positions 1725-2265 (LASFSTCDLI…ATSKLGKRSA (541 aa)) are nonhelical region. VWFA domains follow at residues 1756–1936 (ELVF…ERLQ) and 1964–2165 (DTAF…INSI). The tract at residues 2186 to 2205 (SRDLKPPPRQFRSFVPGPQK) is disordered.

It belongs to the type VI collagen family. Trimers composed of three different chains: alpha-1(VI), alpha-2(VI), and alpha-3(VI) or alpha-4(VI) or alpha-5(VI) or alpha-6(VI). Prolines at the third position of the tripeptide repeating unit (G-X-Y) are hydroxylated in some or all of the chains. In newborn, it is expressed in lung, heart, kidney, muscle, brain, intestine, skin, femur and sternum. In adult, it is expressed in lung, heart, muscle, ovary, brain, liver and sternum.

The protein resides in the secreted. Its subcellular location is the extracellular space. The protein localises to the extracellular matrix. Functionally, collagen VI acts as a cell-binding protein. This Mus musculus (Mouse) protein is Collagen alpha-6(VI) chain (Col6a6).